Consider the following 269-residue polypeptide: Bis(5'-nucleosyl)-tetraphosphatase, symmetrical (269 aa).

The protein belongs to the Ap4A hydrolase family.

The enzyme catalyses P(1),P(4)-bis(5'-adenosyl) tetraphosphate + H2O = 2 ADP + 2 H(+). Its function is as follows. Hydrolyzes diadenosine 5',5'''-P1,P4-tetraphosphate to yield ADP. This chain is Bis(5'-nucleosyl)-tetraphosphatase, symmetrical, found in Vibrio vulnificus (strain YJ016).